The primary structure comprises 1322 residues: Sal-like protein 1 (1322 aa).

The segment at 1 to 41 (MSRRKQAKPQHFQSDPEVASLPRRDGDTEKGQPSRPTKSKD) is disordered. Basic and acidic residues predominate over residues 22-41 (PRRDGDTEKGQPSRPTKSKD). The C2H2-type 1; atypical zinc finger occupies 43–65 (HVCGRCCAEFFELSDLLLHKKSC). Residues 78 to 128 (PASPAKTFPPGPSLNDPDDQMKDAANKADQEDCSDLSEPKGLDREESMEVE) form a disordered region. 2 stretches are compositionally biased toward basic and acidic residues: residues 96–107 (DQMKDAANKADQ) and 114–124 (SEPKGLDREES). A Glycyl lysine isopeptide (Lys-Gly) (interchain with G-Cter in SUMO2) cross-link involves residue lysine 440. 2 C2H2-type zinc fingers span residues 450–472 (HKCRFCAKVFGSDSALQIHLRSH) and 478–500 (FKCNICGNRFSTKGNLKVHFQRH). Positions 578–659 (PIPISHSAAS…GGPGGTTFTN (82 aa)) are disordered. Polar residues predominate over residues 584-594 (SAASPQGSVKS). Residues serine 591, serine 594, and serine 596 each carry the phosphoserine modification. A compositionally biased stretch (polar residues) spans 629–645 (NMASSAVPTAGNSTLNS). Glycyl lysine isopeptide (Lys-Gly) (interchain with G-Cter in SUMO2) cross-links involve residues lysine 672, lysine 689, and lysine 700. 3 C2H2-type zinc fingers span residues 705 to 727 (NECIICHRVLSCQSALKMHYRTH), 733 to 755 (FKCKICGRAFTTKGNLKTHYSVH), and 765 to 787 (HSCPICQKKFTNAVVLQQHIRMH). Disordered stretches follow at residues 789-855 (GGQI…SSPL) and 891-961 (SMEG…GLSP). Acidic residues predominate over residues 819–832 (DLDNFSDENMEECP). A compositionally biased stretch (low complexity) spans 842–855 (SADASQDSLSSSPL). The span at 898–935 (TNDSSSVGGDMESQSAGSPAISESTSSMQALSPSNSTQ) shows a compositional bias: polar residues. Over residues 936–948 (EFHKSPGMEEKPQ) the composition is skewed to basic and acidic residues. Position 940 is a phosphoserine (serine 940). Residues lysine 946 and lysine 981 each participate in a glycyl lysine isopeptide (Lys-Gly) (interchain with G-Cter in SUMO2) cross-link. 2 C2H2-type zinc fingers span residues 1000 to 1022 (TACDICGKTFACQSALDIHYRSH) and 1028 to 1050 (FICTVCNRGFSTKGNLKQHMLTH). Lysine 1085 participates in a covalent cross-link: Glycyl lysine isopeptide (Lys-Gly) (interchain with G-Cter in SUMO2). A disordered region spans residues 1094–1119 (VSPQDSKDAPTSHVPQGPLSSSATSP). 2 consecutive C2H2-type zinc fingers follow at residues 1133-1155 (HYCNTCGKTFSSSSALQIHERTH) and 1161-1183 (FACTICGRAFTTKGNLKVHMGTH). Glycyl lysine isopeptide (Lys-Gly) (interchain with G-Cter in SUMO2) cross-links involve residues lysine 1218, lysine 1297, and lysine 1317.

Belongs to the sal C2H2-type zinc-finger protein family. May associate with NuRD histone deacetylase complex (HDAC). Interacts with components of HDAC complex including HDAC1, HDAC2, RBBP4, RBPP7, MTA1 and MTA2. Interacts with CCNQ. Interacts with NSD2 (via PHD-type zinc fingers 1, 2 and 3). In terms of tissue distribution, expressed in the metanephric mesenchyme surrounding ureteric bud.

It localises to the nucleus. Functionally, transcriptional repressor involved in organogenesis. Plays an essential role in ureteric bud invasion during kidney development. This is Sal-like protein 1 (Sall1) from Mus musculus (Mouse).